We begin with the raw amino-acid sequence, 230 residues long: uncharacterized protein (230 aa).

Positions 1 to 18 (MRQYTSKSILFMTAIALS) are cleaved as a signal peptide.

This is an uncharacterized protein from Pasteurella multocida (strain Pm70).